Here is a 557-residue protein sequence, read N- to C-terminus: Arginine--tRNA ligase (557 aa).

The 'HIGH' region motif lies at 132–142 (ANPTGLLHMGN).

It belongs to the class-I aminoacyl-tRNA synthetase family. Monomer.

The protein resides in the cytoplasm. It carries out the reaction tRNA(Arg) + L-arginine + ATP = L-arginyl-tRNA(Arg) + AMP + diphosphate. This is Arginine--tRNA ligase from Carboxydothermus hydrogenoformans (strain ATCC BAA-161 / DSM 6008 / Z-2901).